We begin with the raw amino-acid sequence, 555 residues long: Formate--tetrahydrofolate ligase (555 aa).

An ATP-binding site is contributed by 65-72; that stretch reads TPAGEGKS.

It belongs to the formate--tetrahydrofolate ligase family.

It carries out the reaction (6S)-5,6,7,8-tetrahydrofolate + formate + ATP = (6R)-10-formyltetrahydrofolate + ADP + phosphate. It functions in the pathway one-carbon metabolism; tetrahydrofolate interconversion. The protein is Formate--tetrahydrofolate ligase of Staphylococcus haemolyticus (strain JCSC1435).